The primary structure comprises 566 residues: Urease subunit beta (566 aa).

The Urease domain maps to 129–566 (GGIDTHIHFI…VPMARRYFMF (438 aa)). Residues histidine 134, histidine 136, and lysine 217 each contribute to the Ni(2+) site. Residue lysine 217 is modified to N6-carboxylysine. Histidine 219 provides a ligand contact to substrate. Ni(2+)-binding residues include histidine 246 and histidine 272. Histidine 320 serves as the catalytic Proton donor. Aspartate 360 provides a ligand contact to Ni(2+).

Belongs to the metallo-dependent hydrolases superfamily. Urease alpha subunit family. As to quaternary structure, heterohexamer of 3 UreA (alpha) and 3 UreB (beta) subunits. It depends on Ni cation as a cofactor. Post-translationally, carboxylation allows a single lysine to coordinate two nickel ions.

It is found in the cytoplasm. It carries out the reaction urea + 2 H2O + H(+) = hydrogencarbonate + 2 NH4(+). It functions in the pathway nitrogen metabolism; urea degradation; CO(2) and NH(3) from urea (urease route): step 1/1. The polypeptide is Urease subunit beta (Aliarcobacter butzleri (strain RM4018) (Arcobacter butzleri)).